The primary structure comprises 223 residues: DNA-directed RNA polymerase III subunit RPC7 (223 aa).

The segment covering 111–124 (MMPRKKCKKGDPKS) has biased composition (basic and acidic residues). The tract at residues 111–223 (MMPRKKCKKG…SDDNMDEATY (113 aa)) is disordered. Threonine 134 carries the post-translational modification Phosphothreonine. Positions 144-156 (KTIEELEKRGEGE) are enriched in basic and acidic residues. The residue at position 158 (serine 158) is a Phosphoserine. 2 stretches are compositionally biased toward acidic residues: residues 173–198 (KDDE…EEND) and 206–223 (NGDD…EATY).

The protein belongs to the eukaryotic RPC7 RNA polymerase subunit family. Component of the RNA polymerase III complex consisting of 17 subunits: a ten-subunit horseshoe-shaped catalytic core composed of POLR3A/RPC1, POLR3B/RPC2, POLR1C/RPAC1, POLR1D/RPAC2, POLR3K/RPC10, POLR2E/RPABC1, POLR2F/RPABC2, POLR2H/RPABC3, POLR2K/RPABC4 and POLR2L/RPABC5; a mobile stalk composed of two subunits POLR3H/RPC8 and CRCP/RPC9, protruding from the core and functioning primarily in transcription initiation; and additional subunits homologous to general transcription factors of the RNA polymerase II machinery, POLR3C/RPC3-POLR3F/RPC6-POLR3G/RPC7 heterotrimer required for transcription initiation and POLR3D/RPC4-POLR3E/RPC5 heterodimer involved in both transcription initiation and termination. Directly interacts with POLR3C/RPC62. Also found in a trimeric complex with POLR3C/RPC3 and POLR3GL. As to expression, expressed at low levels in the liver.

It localises to the nucleus. The protein resides in the cytoplasm. DNA-dependent RNA polymerase catalyzes the transcription of DNA into RNA using the four ribonucleoside triphosphates as substrates. Specific peripheric component of RNA polymerase III (Pol III) which synthesizes small non-coding RNAs including 5S rRNA, snRNAs, tRNAs and miRNAs from at least 500 distinct genomic loci. Acts as a long tether that bridges POLR3C/RPC3-POLR3F/RPC6-POLR3G/RPC7 heterotrimer and the mobile stalk of Pol III, coordinating the dynamics of Pol III stalk and clamp modules during the transition from apo to elongation state. Pol III exists as two alternative complexes defined by the mutually exclusive incorporation of subunit POLR3G/RPC7alpha or POLR3GL/RPC7beta. POLR3G/RPC7alpha modulates Pol III transcriptome by specifically enhancing the transcription of snaR-A non-coding RNAs. At resting state, occupies the active site of apo Pol III and keeps Pol III in an autoinhibitory mode, preventing non-specific transcription. Pol III plays a key role in sensing and limiting infection by intracellular bacteria and DNA viruses. Acts as a nuclear and cytosolic DNA sensor involved in innate immune response. Can sense non-self dsDNA that serves as template for transcription into dsRNA. The non-self RNA polymerase III transcripts, such as Epstein-Barr virus-encoded RNAs (EBERs), induce type I interferon and NF-kappa-B through the RIG-I pathway. In Mus musculus (Mouse), this protein is DNA-directed RNA polymerase III subunit RPC7 (Polr3g).